We begin with the raw amino-acid sequence, 380 residues long: Peptide chain release factor 1-like, mitochondrial (380 aa).

Residues 1–26 constitute a mitochondrion transit peptide; the sequence is MRSRVLWGAARWLWPRRAVGPARRPL. The stretch at 63-117 forms a coiled coil; it reads ELLAVIKLLNEKERELRETEHLLHDENEDLRKLAENEITLCQKEITQLKHQIILL. Residues 236–300 are GGQ domain; the sequence is PKDLRIDTKR…LRAKLYSMHL (65 aa). Residues 250-252 carry the GGQ motif; the sequence is GGQ. Position 252 is an N5-methylglutamine (Gln252).

The protein belongs to the prokaryotic/mitochondrial release factor family. Post-translationally, methylation of glutamine in the GGQ triplet by HEMK1 is conserved from bacteria to mammals. In terms of tissue distribution, expressed in skeletal muscle (at protein level).

Its subcellular location is the mitochondrion. Mitochondrial peptide chain release factor that directs the termination of translation in response to the peptide chain termination codons UAA and UAG. In Homo sapiens (Human), this protein is Peptide chain release factor 1-like, mitochondrial.